Consider the following 124-residue polypeptide: Fluoride-specific ion channel FluC (124 aa).

4 helical membrane passes run leucine 4–isoleucine 24, phenylalanine 35–glycine 55, proline 62–phenylalanine 82, and tryptophan 95–leucine 115. Na(+) is bound by residues glycine 74 and threonine 77.

Belongs to the fluoride channel Fluc/FEX (TC 1.A.43) family.

The protein localises to the cell inner membrane. It catalyses the reaction fluoride(in) = fluoride(out). Na(+) is not transported, but it plays an essential structural role and its presence is essential for fluoride channel function. Its function is as follows. Fluoride-specific ion channel. Important for reducing fluoride concentration in the cell, thus reducing its toxicity. The sequence is that of Fluoride-specific ion channel FluC from Shewanella denitrificans (strain OS217 / ATCC BAA-1090 / DSM 15013).